We begin with the raw amino-acid sequence, 169 residues long: Cell division inhibitor SulA (169 aa).

A disordered region spans residues 1–22 (MHTSIYANRSTSFSPSAGNDTQ). The segment at 106-112 (ALRTGNY) is ftsZ binding. The interval 162 to 169 (KIHSNLYH) is lon protease binding.

Belongs to the SulA family. As to quaternary structure, interacts with FtsZ. Is rapidly cleaved and degraded by the Lon protease once DNA damage is repaired.

In terms of biological role, component of the SOS system and an inhibitor of cell division. Accumulation of SulA causes rapid cessation of cell division and the appearance of long, non-septate filaments. In the presence of GTP, binds a polymerization-competent form of FtsZ in a 1:1 ratio, thus inhibiting FtsZ polymerization and therefore preventing it from participating in the assembly of the Z ring. This mechanism prevents the premature segregation of damaged DNA to daughter cells during cell division. This is Cell division inhibitor SulA from Enterobacter sp. (strain 638).